The primary structure comprises 115 residues: uncharacterized protein (115 aa).

This is an uncharacterized protein from Haemophilus influenzae (strain ATCC 51907 / DSM 11121 / KW20 / Rd).